Reading from the N-terminus, the 116-residue chain is Ribonuclease P protein component (116 aa).

It belongs to the RnpA family. Consists of a catalytic RNA component (M1 or rnpB) and a protein subunit.

The catalysed reaction is Endonucleolytic cleavage of RNA, removing 5'-extranucleotides from tRNA precursor.. Its function is as follows. RNaseP catalyzes the removal of the 5'-leader sequence from pre-tRNA to produce the mature 5'-terminus. It can also cleave other RNA substrates such as 4.5S RNA. The protein component plays an auxiliary but essential role in vivo by binding to the 5'-leader sequence and broadening the substrate specificity of the ribozyme. This is Ribonuclease P protein component from Leuconostoc mesenteroides subsp. mesenteroides (strain ATCC 8293 / DSM 20343 / BCRC 11652 / CCM 1803 / JCM 6124 / NCDO 523 / NBRC 100496 / NCIMB 8023 / NCTC 12954 / NRRL B-1118 / 37Y).